We begin with the raw amino-acid sequence, 859 residues long: MQEQYNPSEIEALVQKHWHDNKTFEVTEDANKEKFYCLSMFPYPSGRLHMGHVRNYTIGDVVARFQRLQGKNVLQPIGWDSFGLPAENAAINNKTAPAPWTYENIEYMKNQLKLLGFGYDWSREIATCTPEYYRWEQWFFTKLYEKGLVYKKTASVNWCPNDETVLANEQVQDGCCWRCDTPVEQKEIPQWFIKITAYAEELLNDIDTLDGWPEQVKTMQRNWIGRSEGVEMTFGVAGHDKSFDIYTTRPDTLMGVTYVAIAAGHPLAEIAAQTNPELAAFIDECKNSTTSEAELATMEKRGVATGLFAIHPITGKQVPIWAANFVLMNYGTGAVMSVPGHDQRDFEFAKKYGLAIEAVIKPVDGDVDISEAAYTEKGVLFNSGEFDGLDFEAGFNAIANKLVAEGKGKRQVNYRLRDWGVSRQRYWGAPIPMVTLADGTVIPTPADQLPVLLPEDVVMDGIQSPIKADKEWAKTQVNGQDALRETDTFDTFMESSWYYARYCSPHADEMLDPAKANYWLPVDQYIGGIEHACMHLLYFRFFHKLLRDAGLVNSNEPAKQLLTQGMVLADAFYYINEKGARVWVSPLDVATTEKDDKGRITKAIDKDGNELVYTGMSKMSKSKNNGIDPQVMVEKYGADTVRLFMMFASPPELTLEWQESGVEGAHRFIKRLWKLANEHVNQANSEALDVSTLTSDQKALRREVHKTIAKVTDDIGRRQMFNTAVAAVMELMNHLQKAPQTTGQDRAIIGEALSAIVRLLYPIIPHVSFNLWNELGNASNIEDSQWPVVDEAALVEDSKLIVVQVNGKVRAKITVAADADKESVEALGMSDEHVIKYLDGLTVRKVIYVPGKLLSIVAN.

Residues 42–52 (PYPSGRLHMGH) carry the 'HIGH' region motif. Residues 618–622 (KMSKS) carry the 'KMSKS' region motif. Lys621 lines the ATP pocket.

This sequence belongs to the class-I aminoacyl-tRNA synthetase family.

It is found in the cytoplasm. It catalyses the reaction tRNA(Leu) + L-leucine + ATP = L-leucyl-tRNA(Leu) + AMP + diphosphate. This chain is Leucine--tRNA ligase, found in Shewanella baltica (strain OS185).